We begin with the raw amino-acid sequence, 362 residues long: Phosphoserine aminotransferase (362 aa).

The L-glutamate site is built by serine 9 and arginine 42. Residues 76 to 77 (GR), tryptophan 102, threonine 153, aspartate 174, and glutamine 197 each bind pyridoxal 5'-phosphate. The residue at position 198 (lysine 198) is an N6-(pyridoxal phosphate)lysine. 239–240 (NT) lines the pyridoxal 5'-phosphate pocket.

Belongs to the class-V pyridoxal-phosphate-dependent aminotransferase family. SerC subfamily. Homodimer. It depends on pyridoxal 5'-phosphate as a cofactor.

The protein resides in the cytoplasm. It catalyses the reaction O-phospho-L-serine + 2-oxoglutarate = 3-phosphooxypyruvate + L-glutamate. It carries out the reaction 4-(phosphooxy)-L-threonine + 2-oxoglutarate = (R)-3-hydroxy-2-oxo-4-phosphooxybutanoate + L-glutamate. It functions in the pathway amino-acid biosynthesis; L-serine biosynthesis; L-serine from 3-phospho-D-glycerate: step 2/3. It participates in cofactor biosynthesis; pyridoxine 5'-phosphate biosynthesis; pyridoxine 5'-phosphate from D-erythrose 4-phosphate: step 3/5. Catalyzes the reversible conversion of 3-phosphohydroxypyruvate to phosphoserine and of 3-hydroxy-2-oxo-4-phosphonooxybutanoate to phosphohydroxythreonine. Is involved in both pyridoxine and serine biosynthesis. This Escherichia coli (strain K12) protein is Phosphoserine aminotransferase (serC).